The following is a 324-amino-acid chain: MLEKIVENRHLSFEEAYDLFNILKEESEVRIAAYLAALQTKGYTSEEIAGFAKAMRDNAIKLDLGEVLDTAGTGGDKSFTINVSTASALILSEYTKVAKHGNVSVTSRSGSANLLEALGINIKISPEKAKEMIEKVNFTFIFAPMYHPALKRIMPVRKELGIKTIFNILGPLANPANPAYQVVGVNSRDLVEKMARALNYLGVKRATVVHGSGLDEISPEKETIVAEVNRGDIDFYTVTPEDFGLARTKVIPCYSPEESAERIRAVLRGNGKNEDRNFVLINSAMALYTIGIASDLKEGVELAENVLGEKIIKKLEEIACLSKS.

5-phospho-alpha-D-ribose 1-diphosphate-binding positions include G72, 75–76 (GD), T80, 82–85 (NVST), 99–107 (KHGNVSVTS), and S111. G72 lines the anthranilate pocket. S84 is a binding site for Mg(2+). N102 provides a ligand contact to anthranilate. Residue R157 participates in anthranilate binding. 2 residues coordinate Mg(2+): D215 and E216.

Belongs to the anthranilate phosphoribosyltransferase family. Homodimer. It depends on Mg(2+) as a cofactor.

The catalysed reaction is N-(5-phospho-beta-D-ribosyl)anthranilate + diphosphate = 5-phospho-alpha-D-ribose 1-diphosphate + anthranilate. It functions in the pathway amino-acid biosynthesis; L-tryptophan biosynthesis; L-tryptophan from chorismate: step 2/5. Its function is as follows. Catalyzes the transfer of the phosphoribosyl group of 5-phosphorylribose-1-pyrophosphate (PRPP) to anthranilate to yield N-(5'-phosphoribosyl)-anthranilate (PRA). This is Anthranilate phosphoribosyltransferase from Pyrococcus furiosus (strain ATCC 43587 / DSM 3638 / JCM 8422 / Vc1).